Consider the following 130-residue polypeptide: Small ribosomal subunit protein uS9 (130 aa).

This sequence belongs to the universal ribosomal protein uS9 family.

The protein is Small ribosomal subunit protein uS9 of Verminephrobacter eiseniae (strain EF01-2).